The sequence spans 268 residues: Bis(5'-nucleosyl)-tetraphosphatase, symmetrical (268 aa).

It belongs to the Ap4A hydrolase family.

The enzyme catalyses P(1),P(4)-bis(5'-adenosyl) tetraphosphate + H2O = 2 ADP + 2 H(+). In terms of biological role, hydrolyzes diadenosine 5',5'''-P1,P4-tetraphosphate to yield ADP. The polypeptide is Bis(5'-nucleosyl)-tetraphosphatase, symmetrical (Nitrosomonas europaea (strain ATCC 19718 / CIP 103999 / KCTC 2705 / NBRC 14298)).